A 251-amino-acid polypeptide reads, in one-letter code: Hydroxyacylglutathione hydrolase (251 aa).

Zn(2+) is bound by residues His-53, His-55, Asp-57, His-58, His-110, Asp-127, and His-165.

This sequence belongs to the metallo-beta-lactamase superfamily. Glyoxalase II family. Monomer. Zn(2+) is required as a cofactor.

It carries out the reaction an S-(2-hydroxyacyl)glutathione + H2O = a 2-hydroxy carboxylate + glutathione + H(+). It participates in secondary metabolite metabolism; methylglyoxal degradation; (R)-lactate from methylglyoxal: step 2/2. Functionally, thiolesterase that catalyzes the hydrolysis of S-D-lactoyl-glutathione to form glutathione and D-lactic acid. The sequence is that of Hydroxyacylglutathione hydrolase from Blochmanniella pennsylvanica (strain BPEN).